The chain runs to 520 residues: Serine/threonine-protein kinases drp72 (520 aa).

Positions 20–281 constitute a Protein kinase domain; the sequence is YTLQWIVGHG…NELARAVSAV (262 aa). Residues 26-34 and Lys49 each bind ATP; that span reads VGHGGMSTV. The active-site Proton acceptor is the Asp148. Disordered regions lie at residues 315-334 and 366-504; these read ARPT…RQEK and SGDS…DAAD. Positions 374-394 are enriched in low complexity; sequence TPETITQTVTPTETTTSEEPT. Over residues 395 to 411 the composition is skewed to pro residues; sequence LAPPPVQPTRQPVPTPD. Over residues 416-429 the composition is skewed to polar residues; the sequence is RLPTTTQESPTRVS. The segment covering 440 to 449 has biased composition (low complexity); it reads EQTTPGGQPP. Positions 450–460 are enriched in polar residues; it reads LSTLPTSLGWQ. Positions 469-484 are enriched in low complexity; sequence QGNPNTTGNPANPGTP. Gly residues predominate over residues 485-496; the sequence is GTTGGNGTGNAG.

The protein belongs to the protein kinase superfamily. Ser/Thr protein kinase family.

It carries out the reaction L-seryl-[protein] + ATP = O-phospho-L-seryl-[protein] + ADP + H(+). The catalysed reaction is L-threonyl-[protein] + ATP = O-phospho-L-threonyl-[protein] + ADP + H(+). The chain is Serine/threonine-protein kinases drp72 from Corynebacterium efficiens (strain DSM 44549 / YS-314 / AJ 12310 / JCM 11189 / NBRC 100395).